The sequence spans 187 residues: MRPTSGCSKDDTIQKQNRRHNTVDNKQEKLPLSIEIFLNKQINKISFDTIRSKQNCRLKEIYCRLKIRCRLKKKFIKSLSKKIISYHFISFHTIVVLLLLPPFSHLLVLVYPSVFTTAFYHQKWALRLNPCLPTYFFHRQRQCVTLLIRNANENMRARRVNSVMLTKPKQFLFLLEFITLFIFTYCL.

Positions methionine 1 to aspartate 24 are disordered. A run of 2 helical transmembrane segments spans residues isoleucine 83–histidine 105 and valine 163–phenylalanine 183.

The protein resides in the cytoplasm. It is found in the nucleus membrane. Functionally, has a role in meiosis. The polypeptide is Meiotically up-regulated gene 155 protein (mug155) (Schizosaccharomyces pombe (strain 972 / ATCC 24843) (Fission yeast)).